The primary structure comprises 87 residues: MSERNQRKVYQGRVVSDKMDKTITVVVETYKKHSLYGKRVRYSKKLKAHDENNQAKIGDIVKVMETRPLSATKRFRLVEVVEEAVII.

The protein belongs to the universal ribosomal protein uS17 family. As to quaternary structure, part of the 30S ribosomal subunit.

In terms of biological role, one of the primary rRNA binding proteins, it binds specifically to the 5'-end of 16S ribosomal RNA. This Bacillus pumilus (strain SAFR-032) protein is Small ribosomal subunit protein uS17.